The primary structure comprises 155 residues: Large ribosomal subunit protein bL9c (155 aa).

The protein belongs to the bacterial ribosomal protein bL9 family.

The protein localises to the plastid. Its subcellular location is the chloroplast. In terms of biological role, binds to the 23S rRNA. The sequence is that of Large ribosomal subunit protein bL9c from Pyropia yezoensis (Susabi-nori).